A 446-amino-acid polypeptide reads, in one-letter code: L-2-hydroxyglutarate dehydrogenase, mitochondrial (446 aa).

The N-terminal 28 residues, 1-28, are a transit peptide targeting the mitochondrion; that stretch reads MKNSSSMLKGVKSFIGSGIYTNKPIYDV.

This sequence belongs to the L2HGDH family. FAD is required as a cofactor.

Its subcellular location is the mitochondrion. It carries out the reaction (S)-2-hydroxyglutarate + A = 2-oxoglutarate + AH2. The chain is L-2-hydroxyglutarate dehydrogenase, mitochondrial (l2hgdh) from Dictyostelium discoideum (Social amoeba).